A 182-amino-acid polypeptide reads, in one-letter code: Coiled-coil domain-containing protein 32 (182 aa).

Residues 1–10 show a composition bias toward basic and acidic residues; the sequence is MMIDDFETHA. 2 disordered regions span residues 1-61 and 153-182; these read MMID…FSPW and PTQN…SPEK. A compositionally biased stretch (polar residues) spans 153–167; that stretch reads PTQNSETPASSSQTD. Over residues 172 to 182 the composition is skewed to acidic residues; it reads EEEEECPSPEK.

Associates with adaptor protein complex 2 (AP-2).

It localises to the membrane. The protein localises to the coated pit. In terms of biological role, regulates clathrin-mediated endocytsois of cargos such as transferrin probably through the association and modulation of adaptor protein complex 2 (AP-2). Has a role in ciliogenesis and is required for proper cephalic and left/right axis development. In Danio rerio (Zebrafish), this protein is Coiled-coil domain-containing protein 32.